Reading from the N-terminus, the 481-residue chain is Tryptophan 5-hydroxylase (481 aa).

One can recognise an ACT domain in the interval 56–131 (SVIFSLKNEI…NVISMSPPEN (76 aa)). The L-tryptophan site is built by Tyr-272, Arg-294, and Thr-302. Fe cation-binding residues include His-309, His-314, and Glu-354. L-tryptophan-binding residues include Ser-373 and Ile-403.

It belongs to the biopterin-dependent aromatic amino acid hydroxylase family. In terms of assembly, homotetramer. It depends on Fe(2+) as a cofactor.

The catalysed reaction is (6R)-L-erythro-5,6,7,8-tetrahydrobiopterin + L-tryptophan + O2 = 5-hydroxy-L-tryptophan + (4aS,6R)-4a-hydroxy-L-erythro-5,6,7,8-tetrahydrobiopterin. It functions in the pathway aromatic compound metabolism; serotonin biosynthesis; serotonin from L-tryptophan: step 1/2. Functionally, oxidizes L-tryptophan to 5-hydroxy-l-tryptophan in the rate-determining step of serotonin biosynthesis. The sequence is that of Tryptophan 5-hydroxylase (tph1) from Xenopus laevis (African clawed frog).